Reading from the N-terminus, the 697-residue chain is Elongation factor G (697 aa).

Residues 8–282 (EDYRNIGIMA…AVVDYLPSPL (275 aa)) form the tr-type G domain. GTP is bound by residues 17 to 24 (AHIDAGKT), 81 to 85 (DTPGH), and 135 to 138 (NKMD).

Belongs to the TRAFAC class translation factor GTPase superfamily. Classic translation factor GTPase family. EF-G/EF-2 subfamily.

It localises to the cytoplasm. In terms of biological role, catalyzes the GTP-dependent ribosomal translocation step during translation elongation. During this step, the ribosome changes from the pre-translocational (PRE) to the post-translocational (POST) state as the newly formed A-site-bound peptidyl-tRNA and P-site-bound deacylated tRNA move to the P and E sites, respectively. Catalyzes the coordinated movement of the two tRNA molecules, the mRNA and conformational changes in the ribosome. This Mycoplasmopsis agalactiae (strain NCTC 10123 / CIP 59.7 / PG2) (Mycoplasma agalactiae) protein is Elongation factor G.